Consider the following 128-residue polypeptide: Transcription antitermination protein NusB (128 aa).

Belongs to the NusB family.

In terms of biological role, involved in transcription antitermination. Required for transcription of ribosomal RNA (rRNA) genes. Binds specifically to the boxA antiterminator sequence of the ribosomal RNA (rrn) operons. The chain is Transcription antitermination protein NusB from Listeria monocytogenes serotype 4a (strain HCC23).